Reading from the N-terminus, the 597-residue chain is Elongation factor 4 (597 aa).

The tr-type G domain occupies 4–181 (SKIRNFSIIA…AIVDYVPAPK (178 aa)). GTP contacts are provided by residues 16–21 (DHGKST) and 128–131 (NKID).

The protein belongs to the TRAFAC class translation factor GTPase superfamily. Classic translation factor GTPase family. LepA subfamily.

The protein localises to the cell membrane. The catalysed reaction is GTP + H2O = GDP + phosphate + H(+). Functionally, required for accurate and efficient protein synthesis under certain stress conditions. May act as a fidelity factor of the translation reaction, by catalyzing a one-codon backward translocation of tRNAs on improperly translocated ribosomes. Back-translocation proceeds from a post-translocation (POST) complex to a pre-translocation (PRE) complex, thus giving elongation factor G a second chance to translocate the tRNAs correctly. Binds to ribosomes in a GTP-dependent manner. This chain is Elongation factor 4, found in Mycoplasmopsis agalactiae (strain NCTC 10123 / CIP 59.7 / PG2) (Mycoplasma agalactiae).